Consider the following 484-residue polypeptide: ATP synthase subunit beta (484 aa).

ATP is bound at residue 162–169 (GGAGVGKT).

The protein belongs to the ATPase alpha/beta chains family. F-type ATPases have 2 components, CF(1) - the catalytic core - and CF(0) - the membrane proton channel. CF(1) has five subunits: alpha(3), beta(3), gamma(1), delta(1), epsilon(1). CF(0) has three main subunits: a(1), b(2) and c(9-12). The alpha and beta chains form an alternating ring which encloses part of the gamma chain. CF(1) is attached to CF(0) by a central stalk formed by the gamma and epsilon chains, while a peripheral stalk is formed by the delta and b chains.

It is found in the cell inner membrane. The catalysed reaction is ATP + H2O + 4 H(+)(in) = ADP + phosphate + 5 H(+)(out). Functionally, produces ATP from ADP in the presence of a proton gradient across the membrane. The catalytic sites are hosted primarily by the beta subunits. This Agrobacterium fabrum (strain C58 / ATCC 33970) (Agrobacterium tumefaciens (strain C58)) protein is ATP synthase subunit beta.